We begin with the raw amino-acid sequence, 222 residues long: MKQPLILSFLLLGMVSAFHLETAHLENPKREESLKQEADGSREQGRELALTQETKQTEGEEVEGSQHQDIFEDEEAMESDPDALNKDSACPKEEDTTHFQGTPGCKSCNYVLVRTPETFDKAQRVCRRCYRGNLASVHSYSFNYQIQNLARKINQSIVWIGGILRGWFWKKFCWMDGSCWDFGYWAPGQPGSGGGHCVTLCTKGGHWRRASCKSHLPFICSF.

The first 17 residues, 1-17 (MKQPLILSFLLLGMVSA), serve as a signal peptide directing secretion. Residues 27–46 (NPKREESLKQEADGSREQGR) show a composition bias toward basic and acidic residues. Residues 27–100 (NPKREESLKQ…PKEEDTTHFQ (74 aa)) form a disordered region. The segment covering 71 to 81 (FEDEEAMESDP) has biased composition (acidic residues). Residues 83 to 97 (ALNKDSACPKEEDTT) show a composition bias toward basic and acidic residues. The C-type lectin domain maps to 105 to 221 (CKSCNYVLVR…CKSHLPFICS (117 aa)). Cystine bridges form between Cys126/Cys220 and Cys197/Cys212.

In terms of tissue distribution, expressed in bone marrow, spleen, and thymus. Not detected in heart, liver or lung.

Possesses similar cytotoxic and cytostimulatory activities to PRG2/MBP. The protein is Proteoglycan 3 of Mus musculus (Mouse).